Here is a 138-residue protein sequence, read N- to C-terminus: Acidic phospholipase A2 BthA-1 (138 aa).

The first 16 residues, 1–16 (MRTLWIMAVLLVGVEG), serve as a signal peptide directing secretion. Cystine bridges form between cysteine 42-cysteine 131, cysteine 44-cysteine 60, cysteine 59-cysteine 111, cysteine 65-cysteine 138, cysteine 66-cysteine 104, cysteine 73-cysteine 97, and cysteine 91-cysteine 102. 3 residues coordinate Ca(2+): tyrosine 43, glycine 47, and glycine 48. The active site involves histidine 63. Position 64 (aspartate 64) interacts with Ca(2+). The active site involves aspartate 105.

Belongs to the phospholipase A2 family. Group II subfamily. D49 sub-subfamily. Homodimer; non-covalently linked. Ca(2+) is required as a cofactor. In terms of tissue distribution, expressed by the venom gland.

It is found in the secreted. It carries out the reaction a 1,2-diacyl-sn-glycero-3-phosphocholine + H2O = a 1-acyl-sn-glycero-3-phosphocholine + a fatty acid + H(+). With respect to regulation, inhibited by EDTA and bromophenacyl bromide (BPB). Snake venom phospholipase A2 (PLA2) that displays edema-inducing activities (activity that is inhibited by EDTA and dexamethasone), inhibits phospholipid-dependent collagen/ADP-induced platelet aggregation, possess hypotensive as well as anticoagulant activities. In addition, this enzyme shows bactericidal activity against E.coli and S.aureus. PLA2 catalyzes the calcium-dependent hydrolysis of the 2-acyl groups in 3-sn-phosphoglycerides. This is Acidic phospholipase A2 BthA-1 from Bothrops jararacussu (Jararacussu).